Reading from the N-terminus, the 210-residue chain is HTH-type transcriptional regulator MtrR (210 aa).

The region spanning 9–69 is the HTH tetR-type domain; it reads LKTKEHLMLA…ALFQRICDDI (61 aa). The H-T-H motif DNA-binding region spans 32–51; sequence SLNEIAQAAGVTRGALYWHF.

As to quaternary structure, homodimer. Binds to DNA as a pair of dimers.

With respect to regulation, DNA binding is affected significantly by increasing the NaCl concentration. Controls the permeability of the cell envelope to hydrophobic compounds such as antibiotics and detergents. Represses transcription of the mtrCDE-encoded efflux pump by binding within the mtrCDE promoter. Also negatively regulates the expression of farR, by binding to its promoter region, leading indirectly to the positive regulation of expression of the farAB-encoded efflux pump. The protein is HTH-type transcriptional regulator MtrR of Neisseria gonorrhoeae.